The chain runs to 360 residues: Peptide chain release factor 1 (360 aa).

At Q235 the chain carries N5-methylglutamine. Over residues 280–293 (DKQSHEQQAKEAAT) the composition is skewed to basic and acidic residues. The interval 280–300 (DKQSHEQQAKEAATRKSLIGS) is disordered.

Belongs to the prokaryotic/mitochondrial release factor family. Post-translationally, methylated by PrmC. Methylation increases the termination efficiency of RF1.

The protein localises to the cytoplasm. Functionally, peptide chain release factor 1 directs the termination of translation in response to the peptide chain termination codons UAG and UAA. This is Peptide chain release factor 1 from Paraburkholderia xenovorans (strain LB400).